Here is a 222-residue protein sequence, read N- to C-terminus: Nudix hydrolase 11 (222 aa).

One can recognise a Nudix hydrolase domain in the interval 31–175 (AKSSAVLVCL…EGERYLLQYF (145 aa)). The Nudix box motif lies at 73–96 (GGKRDQEDKDDIATALREAREEIG). Mg(2+) contacts are provided by E90 and E94. Residues 186–204 (FIIWALTAGILIRVASIVY) traverse the membrane as a helical segment.

The protein belongs to the Nudix hydrolase family. PCD1 subfamily. It depends on Mn(2+) as a cofactor. Mg(2+) is required as a cofactor. In terms of tissue distribution, expressed in roots, stems and leaves.

The protein resides in the peroxisome membrane. Functionally, coenzyme A diphosphatase which mediates the cleavage of CoA into 3',5'-ADP from CoA and 4'-phosphopantetheine. Can use malonyl-CoA, hexanoyl-CoA, lauroyl-CoA, myristoyl-CoA and palmitoyl-CoA as substrates, but not isobutyryl-CoA or propionyl-CoA. The polypeptide is Nudix hydrolase 11 (NUDT11) (Arabidopsis thaliana (Mouse-ear cress)).